We begin with the raw amino-acid sequence, 357 residues long: UDP-N-acetylglucosamine--N-acetylmuramyl-(pentapeptide) pyrophosphoryl-undecaprenol N-acetylglucosamine transferase (357 aa).

UDP-N-acetyl-alpha-D-glucosamine-binding positions include 13–15 (SAG), arginine 166, serine 196, and glutamine 291.

Belongs to the glycosyltransferase 28 family. MurG subfamily.

The protein localises to the cell membrane. It catalyses the reaction di-trans,octa-cis-undecaprenyl diphospho-N-acetyl-alpha-D-muramoyl-L-alanyl-D-glutamyl-meso-2,6-diaminopimeloyl-D-alanyl-D-alanine + UDP-N-acetyl-alpha-D-glucosamine = di-trans,octa-cis-undecaprenyl diphospho-[N-acetyl-alpha-D-glucosaminyl-(1-&gt;4)]-N-acetyl-alpha-D-muramoyl-L-alanyl-D-glutamyl-meso-2,6-diaminopimeloyl-D-alanyl-D-alanine + UDP + H(+). The protein operates within cell wall biogenesis; peptidoglycan biosynthesis. Functionally, cell wall formation. Catalyzes the transfer of a GlcNAc subunit on undecaprenyl-pyrophosphoryl-MurNAc-pentapeptide (lipid intermediate I) to form undecaprenyl-pyrophosphoryl-MurNAc-(pentapeptide)GlcNAc (lipid intermediate II). This Clostridium perfringens (strain ATCC 13124 / DSM 756 / JCM 1290 / NCIMB 6125 / NCTC 8237 / Type A) protein is UDP-N-acetylglucosamine--N-acetylmuramyl-(pentapeptide) pyrophosphoryl-undecaprenol N-acetylglucosamine transferase.